A 142-amino-acid chain; its full sequence is Large ribosomal subunit protein uL11 (142 aa).

This sequence belongs to the universal ribosomal protein uL11 family. As to quaternary structure, part of the ribosomal stalk of the 50S ribosomal subunit. Interacts with L10 and the large rRNA to form the base of the stalk. L10 forms an elongated spine to which L12 dimers bind in a sequential fashion forming a multimeric L10(L12)X complex. One or more lysine residues are methylated.

Its function is as follows. Forms part of the ribosomal stalk which helps the ribosome interact with GTP-bound translation factors. This chain is Large ribosomal subunit protein uL11, found in Yersinia pestis bv. Antiqua (strain Angola).